The chain runs to 230 residues: MQINLNDVKIEPSWKEVLKDEFLSENFARIKENFLKAKSAGVVYPPSGLIFNAFNLTPFHDVKVVILGQDPYHGANQAMGLSFSVPSGVRVPPSLVNIYKEIYADLGIKEPNSGDLTKWAKQGVLLLNSTLSVSAGAANSHASFGWQGFTDAVIRKISENLQNVVFMLWGNPAKAKAPLIDASKHLILEAAHPSPLARGAFFGCRHFSKANIYLAKHGKTPIEWDLNTKI.

Asp70 functions as the Proton acceptor in the catalytic mechanism.

It belongs to the uracil-DNA glycosylase (UDG) superfamily. UNG family.

It is found in the cytoplasm. It carries out the reaction Hydrolyzes single-stranded DNA or mismatched double-stranded DNA and polynucleotides, releasing free uracil.. Functionally, excises uracil residues from the DNA which can arise as a result of misincorporation of dUMP residues by DNA polymerase or due to deamination of cytosine. This Campylobacter concisus (strain 13826) protein is Uracil-DNA glycosylase.